Reading from the N-terminus, the 675-residue chain is Parasporal crystal protein Cry18Ba (675 aa).

Belongs to the delta endotoxin family.

Binds to the brush border membrane vesicles of scarab larvae and damages the gut wall somehow to allow the vegetative cells of P.popilliae to enter the hemolymph. In Paenibacillus popilliae (Bacillus popilliae), this protein is Parasporal crystal protein Cry18Ba (cry18Ba).